The chain runs to 508 residues: Photosystem II CP47 reaction center protein (508 aa).

6 helical membrane passes run 21 to 36 (SVHI…WAGS), 101 to 115 (IVFS…IWHW), 140 to 156 (GIHL…FGVF), 203 to 218 (IAAG…FHLS), 237 to 252 (VLSS…AFVV), and 457 to 472 (SFAL…HGAR).

This sequence belongs to the PsbB/PsbC family. PsbB subfamily. In terms of assembly, PSII is composed of 1 copy each of membrane proteins PsbA, PsbB, PsbC, PsbD, PsbE, PsbF, PsbH, PsbI, PsbJ, PsbK, PsbL, PsbM, PsbT, PsbX, PsbY, PsbZ, Psb30/Ycf12, at least 3 peripheral proteins of the oxygen-evolving complex and a large number of cofactors. It forms dimeric complexes. Binds multiple chlorophylls. PSII binds additional chlorophylls, carotenoids and specific lipids. is required as a cofactor.

It localises to the plastid. The protein resides in the chloroplast thylakoid membrane. One of the components of the core complex of photosystem II (PSII). It binds chlorophyll and helps catalyze the primary light-induced photochemical processes of PSII. PSII is a light-driven water:plastoquinone oxidoreductase, using light energy to abstract electrons from H(2)O, generating O(2) and a proton gradient subsequently used for ATP formation. This Jasminum nudiflorum (Winter jasmine) protein is Photosystem II CP47 reaction center protein.